We begin with the raw amino-acid sequence, 91 residues long: MNETEATLPVFTLEQVAEHHSPDDCWMAIHGKVYDLTPYVPNHPGPAGMMLVWCGQESTEAWETKSYGEPHSSLAARLLQRYLIGTLEEIT.

The Cytochrome b5 heme-binding domain occupies 8–88 (LPVFTLEQVA…LQRYLIGTLE (81 aa)). An intrachain disulfide couples Cys25 to Cys54. Heme-binding residues include His43 and His71.

This Ectothiorhodospira shaposhnikovii (Ectothiorhodospira vacuolata) protein is Soluble cytochrome b558.